A 123-amino-acid chain; its full sequence is Large ribosomal subunit protein uL14 (123 aa).

This sequence belongs to the universal ribosomal protein uL14 family. As to quaternary structure, part of the 50S ribosomal subunit. Forms a cluster with proteins L3 and L19. In the 70S ribosome, L14 and L19 interact and together make contacts with the 16S rRNA in bridges B5 and B8.

Binds to 23S rRNA. Forms part of two intersubunit bridges in the 70S ribosome. In Photobacterium profundum (strain SS9), this protein is Large ribosomal subunit protein uL14.